A 285-amino-acid chain; its full sequence is Transcription factor LBX1 (285 aa).

The segment covering Met1 to Leu20 has biased composition (basic and acidic residues). Residues Met1 to Phe36 are disordered. A DNA-binding region (homeobox) is located at residues Arg125–Leu184. The interval Glu212–Asp285 is disordered. The segment covering Ser218–Gly230 has biased composition (gly residues). Residues Cys272–Asp285 show a composition bias toward acidic residues.

Interacts with SKOR1 which acts as a transcriptional corepressor.

The protein resides in the nucleus. Functionally, transcription factor required for the development of GABAergic interneurons in the dorsal horn of the spinal cord and migration and further development of hypaxial muscle precursor cells for limb muscles, diaphragm and hypoglossal cord. This is Transcription factor LBX1 from Rattus norvegicus (Rat).